A 277-amino-acid chain; its full sequence is Raffinose operon transcriptional regulatory protein RafR (277 aa).

Residues 176–274 form the HTH araC/xylS-type domain; it reads NLAVSYLQEN…GASPSYYRKS (99 aa). DNA-binding regions (H-T-H motif) lie at residues 193-214 and 241-264; these read MDLCHYLNLSRSYLYTLFKTHA and VQSIANMVGYKDSFTFSKAFKRYS.

Functionally, involved in the regulation of the raffinose-operon. The protein is Raffinose operon transcriptional regulatory protein RafR (rafR) of Pediococcus pentosaceus.